We begin with the raw amino-acid sequence, 173 residues long: Putative metal-dependent hydrolase BCE33L2441 (173 aa).

3 residues coordinate Zn(2+): H65, H156, and H160.

The protein belongs to the metal hydrolase YfiT family. Homodimer. Requires Zn(2+) as cofactor.

Its subcellular location is the cytoplasm. In terms of biological role, possible metal-dependent hydrolase. The chain is Putative metal-dependent hydrolase BCE33L2441 from Bacillus cereus (strain ZK / E33L).